Consider the following 309-residue polypeptide: Tagatose-6-phosphate kinase (309 aa).

The protein belongs to the carbohydrate kinase PfkB family. LacC subfamily.

It carries out the reaction D-tagatofuranose 6-phosphate + ATP = D-tagatofuranose 1,6-bisphosphate + ADP + H(+). Its pathway is carbohydrate metabolism; D-tagatose 6-phosphate degradation; D-glyceraldehyde 3-phosphate and glycerone phosphate from D-tagatose 6-phosphate: step 1/2. The polypeptide is Tagatose-6-phosphate kinase (Streptococcus pneumoniae (strain 70585)).